Consider the following 113-residue polypeptide: Large ribosomal subunit protein uL22 (113 aa).

The protein belongs to the universal ribosomal protein uL22 family. Part of the 50S ribosomal subunit.

This protein binds specifically to 23S rRNA; its binding is stimulated by other ribosomal proteins, e.g. L4, L17, and L20. It is important during the early stages of 50S assembly. It makes multiple contacts with different domains of the 23S rRNA in the assembled 50S subunit and ribosome. In terms of biological role, the globular domain of the protein is located near the polypeptide exit tunnel on the outside of the subunit, while an extended beta-hairpin is found that lines the wall of the exit tunnel in the center of the 70S ribosome. The sequence is that of Large ribosomal subunit protein uL22 from Mycoplasmopsis synoviae (strain 53) (Mycoplasma synoviae).